A 911-amino-acid polypeptide reads, in one-letter code: MVSLLKKLIGSRNDRLLKEYRKQVAQINSLEPKISALSDEELLAKTQEFRDRHQQGTSLDDLLPEAFAVVREAGKRVFGMRHFDVQMLGGIALHNGKIAEMRTGEGKTLMATLPVYLNAIAGKGVHVVTVNDYLARRDAEWMGRLYRFLGMSTGVVVPQQPNDEKIAAYAADITYGTNNEFGFDYLRDNMEYRVEDRRQRRLFYAIVDEVDSILIDEARTPLIISGQAEDHTELYVRMNAVPPLLKRMASEPKPHEPEPEGDYWVDEKSQQVYMSEAGHESAEKILTRVGLLPEGESLYDPRHIALMHHMMVALRAHTLFFRDQQYVVQDDEVVIVDEFTGRLMVGRRWSDGLHQAVEAKEGVKIQHENQTLASITFQNYFRMYDKLSGMTGTADTEAYEFQEIYTLETVIIPTNKPMVRKDQNDQVFKTTQEKYQAILNDIRDCHERGQPVLVGTTSIENSELLAGLLRQAKLPHEVLNAKQHAREAEIVAEAGKPGHITIATNMAGRGTDIVLGGSVDKQVDLIHANEALSEAEKEVRIETLRAEWKPLNERVKQAGGLRIIGTERHESRRIDNQLRGRAGRQGDPGSSRFYLSLEDPLMRIFAGDRVRAIMERLKLPEGEPIEAGMVTRSIETAQRKVEGRNFDIRKQLLEYDDVANDQRKVLYSQRNEVLEAASIGATVEGLRDAAVAEMFRGFIPEESVEEQWDVAGLEKALAGDWHIQLPLTDMLEQEPNLTDEELLERVVAAARQIYTAKVEQVGAESWAQFERSIMLQSIDTHWREHLSALDYLRQGIHLRGYAQKNPKQEYKREAFELFSGMLDRIRDDVVRVLMTVRVQSAEQVEQAEADAAQRHVQNVQYHHSDYDEALADDGQPQGAQPVRNVLPKVGRNEPCPCGSGKKYKHCHGQLA.

Residues Q86, 104-108 (GEGKT), and D512 contribute to the ATP site. Residues 869-888 (ALADDGQPQGAQPVRNVLPK) form a disordered region. The Zn(2+) site is built by C895, C897, C906, and H907.

It belongs to the SecA family. Monomer and homodimer. Part of the essential Sec protein translocation apparatus which comprises SecA, SecYEG and auxiliary proteins SecDF-YajC and YidC. Zn(2+) serves as cofactor.

It is found in the cell inner membrane. It localises to the cytoplasm. The enzyme catalyses ATP + H2O + cellular proteinSide 1 = ADP + phosphate + cellular proteinSide 2.. In terms of biological role, part of the Sec protein translocase complex. Interacts with the SecYEG preprotein conducting channel. Has a central role in coupling the hydrolysis of ATP to the transfer of proteins into and across the cell membrane, serving both as a receptor for the preprotein-SecB complex and as an ATP-driven molecular motor driving the stepwise translocation of polypeptide chains across the membrane. The sequence is that of Protein translocase subunit SecA from Bordetella parapertussis (strain 12822 / ATCC BAA-587 / NCTC 13253).